Reading from the N-terminus, the 207-residue chain is Dephospho-CoA kinase (207 aa).

Residues 8–207 (AIALTGSIGS…LPCVDCVQSS (200 aa)) form the DPCK domain. 16–21 (GSGKST) contacts ATP.

The protein belongs to the CoaE family.

The protein localises to the cytoplasm. The enzyme catalyses 3'-dephospho-CoA + ATP = ADP + CoA + H(+). Its pathway is cofactor biosynthesis; coenzyme A biosynthesis; CoA from (R)-pantothenate: step 5/5. Functionally, catalyzes the phosphorylation of the 3'-hydroxyl group of dephosphocoenzyme A to form coenzyme A. The sequence is that of Dephospho-CoA kinase from Helicobacter hepaticus (strain ATCC 51449 / 3B1).